The following is a 189-amino-acid chain: MTKLLVGLGNPGDKYFETKHNVGFMLIDQLAKKQNVTFTHDKIFQADLASFFLNGEKIYLVKPTTFMNESGKAVHALLTYYGLDIDDLLIIYDDLDMEVGKIRLRAKGSAGGHNGIKSIIQHIGTQVFNRVKIGIGRPKNGMSVVHHVLSKFDRDDYIGILQSIDKVDDSVNYYLQEKNFEKTMQRYNG.

Residue tyrosine 15 participates in tRNA binding. Histidine 20 (proton acceptor) is an active-site residue. The tRNA site is built by phenylalanine 66, asparagine 68, and asparagine 114.

The protein belongs to the PTH family. As to quaternary structure, monomer.

Its subcellular location is the cytoplasm. It carries out the reaction an N-acyl-L-alpha-aminoacyl-tRNA + H2O = an N-acyl-L-amino acid + a tRNA + H(+). Functionally, hydrolyzes ribosome-free peptidyl-tRNAs (with 1 or more amino acids incorporated), which drop off the ribosome during protein synthesis, or as a result of ribosome stalling. In terms of biological role, catalyzes the release of premature peptidyl moieties from peptidyl-tRNA molecules trapped in stalled 50S ribosomal subunits, and thus maintains levels of free tRNAs and 50S ribosomes. The sequence is that of Peptidyl-tRNA hydrolase from Streptococcus pneumoniae (strain JJA).